A 325-amino-acid polypeptide reads, in one-letter code: tRNA U34 carboxymethyltransferase (325 aa).

Residues Lys-91, Trp-105, Lys-110, Gly-130, 152–154, Met-196, Tyr-200, and Arg-315 contribute to the carboxy-S-adenosyl-L-methionine site; that span reads DPS.

It belongs to the class I-like SAM-binding methyltransferase superfamily. CmoB family. Homotetramer.

It catalyses the reaction carboxy-S-adenosyl-L-methionine + 5-hydroxyuridine(34) in tRNA = 5-carboxymethoxyuridine(34) in tRNA + S-adenosyl-L-homocysteine + H(+). In terms of biological role, catalyzes carboxymethyl transfer from carboxy-S-adenosyl-L-methionine (Cx-SAM) to 5-hydroxyuridine (ho5U) to form 5-carboxymethoxyuridine (cmo5U) at position 34 in tRNAs. The chain is tRNA U34 carboxymethyltransferase from Aeromonas hydrophila subsp. hydrophila (strain ATCC 7966 / DSM 30187 / BCRC 13018 / CCUG 14551 / JCM 1027 / KCTC 2358 / NCIMB 9240 / NCTC 8049).